The chain runs to 308 residues: Protein translocase subunit SecF (308 aa).

6 helical membrane-spanning segments follow: residues 28 to 48, 140 to 160, 164 to 184, 194 to 214, 246 to 266, and 272 to 292; these read SIILSLISFIWIGIYKFNFGI, IEAGAMAMLFSFLAIMVYIWV, WYFGLGILIALVHDVILALGF, LSTIAAVLTIIGYSVNDSVVI, ILTVITTLLANLALILFGGEA, and VLVFFGIIAGTYSSIFISAPI.

It belongs to the SecD/SecF family. SecF subfamily. Forms a complex with SecD. Part of the essential Sec protein translocation apparatus which comprises SecA, SecYEG and auxiliary proteins SecDF-YajC and YidC.

Its subcellular location is the cell inner membrane. Functionally, part of the Sec protein translocase complex. Interacts with the SecYEG preprotein conducting channel. SecDF uses the proton motive force (PMF) to complete protein translocation after the ATP-dependent function of SecA. In Rickettsia felis (strain ATCC VR-1525 / URRWXCal2) (Rickettsia azadi), this protein is Protein translocase subunit SecF.